Consider the following 126-residue polypeptide: MSQALRPQAIKTSTTGSSLADILERVLDKGIVIAGDITVSVGSVELLSIRIRLLVASVDKAKEIGINWWESDPYLSSRTQELLASNQQLLERVNLLERELAATKATGVIKKGVLGTPFFIWFYDLV.

The protein belongs to the gas vesicle GvpA family. As to quaternary structure, interacts with GvpA.

The protein resides in the gas vesicle. Functionally, a minor component of the gas vesicle, might be involved in nucleating gas vesicle formation. Gas vesicles (GV) are hollow, gas filled proteinaceous nanostructures. During planktonic growth they allow positioning of the organism at a favorable depth for light or nutrient acquisition. This chain is Gas vesicle protein J, found in Pseudanabaena galeata (strain PCC 6901).